The following is a 476-amino-acid chain: 8-amino-7-oxononanoate synthase (476 aa).

A substrate-binding site is contributed by Arg24. 171 to 172 (GF) is a pyridoxal 5'-phosphate binding site. His210 provides a ligand contact to substrate. Pyridoxal 5'-phosphate-binding positions include Ser260, 285–288 (DDAH), and 316–319 (TLSK). Residue Lys319 is modified to N6-(pyridoxal phosphate)lysine. Thr427 lines the substrate pocket. Positions 474 to 476 (PKL) match the Peroxisomal targeting signal PTS1 motif.

It belongs to the class-II pyridoxal-phosphate-dependent aminotransferase family. BioF subfamily. As to quaternary structure, monomer. It depends on pyridoxal 5'-phosphate as a cofactor.

Its subcellular location is the cytoplasm. It localises to the cytosol. The protein resides in the peroxisome. It catalyses the reaction 6-carboxyhexanoyl-[ACP] + L-alanine + H(+) = (8S)-8-amino-7-oxononanoate + holo-[ACP] + CO2. Its pathway is cofactor biosynthesis; biotin biosynthesis; 8-amino-7-oxononanoate from pimeloyl-CoA: step 1/1. Its function is as follows. Catalyzes the decarboxylative condensation of pimeloyl-[acyl-carrier protein] and L-alanine to produce 8-amino-7-oxononanoate (AON), [acyl-carrier protein], and carbon dioxide. Required for the biosynthesis of D-biotin that prevents light-mediated cell death and modulates defense gene expression, probably by avoiding hydrogen peroxide H(2)O(2) accumulation. The protein is 8-amino-7-oxononanoate synthase of Arabidopsis thaliana (Mouse-ear cress).